A 391-amino-acid polypeptide reads, in one-letter code: Transcription factor TCP3 (391 aa).

Positions 1-34 (MAPDNDHFLDSPSPPLLEMRHHQSATENGGGCGE) are disordered. Residues 49–107 (RKDRHSKVCTAKGPRDRRVRLSAPTAIQFYDVQDRLGFDRPSKAVDWLITKAKSAIDDL) enclose the TCP domain. Disordered stretches follow at residues 122 to 168 (HAAA…PASM), 317 to 345 (HHHH…PGIH), and 363 to 391 (FRIP…DSRH). Over residues 381–391 (KPSSASSDSRH) the composition is skewed to polar residues.

In terms of assembly, interacts with SPL. Interacts with KIN10; KIN11 and FLZ3. Expressed in cotyledons, particularly in the vascular region, in leaves, roots, buds, flowers and immature siliques.

It is found in the nucleus. Plays a pivotal role in the control of morphogenesis of shoot organs by negatively regulating the expression of boundary-specific genes such as CUC genes, probably through the induction of miRNA (e.g. miR164). Participates in ovule development. In Arabidopsis thaliana (Mouse-ear cress), this protein is Transcription factor TCP3 (TCP3).